The primary structure comprises 188 residues: uncharacterized protein (188 aa).

The helical transmembrane segment at 136–156 (TLVKLLLLFLSLMVVIVGVWW) threads the bilayer.

The protein resides in the host membrane. This is an uncharacterized protein from Magallana gigas (Pacific oyster).